The following is a 154-amino-acid chain: Protein Smg homolog (154 aa).

The protein belongs to the Smg family.

The sequence is that of Protein Smg homolog from Aromatoleum aromaticum (strain DSM 19018 / LMG 30748 / EbN1) (Azoarcus sp. (strain EbN1)).